Here is a 190-residue protein sequence, read N- to C-terminus: Peptidyl-tRNA hydrolase (190 aa).

Tyr-14 contacts tRNA. Residue His-19 is the Proton acceptor of the active site. Residues Tyr-64 and Asn-66 each contribute to the tRNA site.

The protein belongs to the PTH family. In terms of assembly, monomer.

The protein localises to the cytoplasm. The catalysed reaction is an N-acyl-L-alpha-aminoacyl-tRNA + H2O = an N-acyl-L-amino acid + a tRNA + H(+). Its function is as follows. Hydrolyzes ribosome-free peptidyl-tRNAs (with 1 or more amino acids incorporated), which drop off the ribosome during protein synthesis, or as a result of ribosome stalling. Functionally, catalyzes the release of premature peptidyl moieties from peptidyl-tRNA molecules trapped in stalled 50S ribosomal subunits, and thus maintains levels of free tRNAs and 50S ribosomes. The protein is Peptidyl-tRNA hydrolase of Rhodopirellula baltica (strain DSM 10527 / NCIMB 13988 / SH1).